A 225-amino-acid chain; its full sequence is Endonuclease V (225 aa).

Mg(2+)-binding residues include D43 and D110.

It belongs to the endonuclease V family. The cofactor is Mg(2+).

The protein resides in the cytoplasm. It carries out the reaction Endonucleolytic cleavage at apurinic or apyrimidinic sites to products with a 5'-phosphate.. Its function is as follows. DNA repair enzyme involved in the repair of deaminated bases. Selectively cleaves double-stranded DNA at the second phosphodiester bond 3' to a deoxyinosine leaving behind the intact lesion on the nicked DNA. This Thermotoga petrophila (strain ATCC BAA-488 / DSM 13995 / JCM 10881 / RKU-1) protein is Endonuclease V.